A 158-amino-acid polypeptide reads, in one-letter code: 6,7-dimethyl-8-ribityllumazine synthase 2 (158 aa).

5-amino-6-(D-ribitylamino)uracil contacts are provided by residues Trp20, 54-56 (AYE), and 78-80 (FVI). Catalysis depends on Arg86, which acts as the Proton donor. 5-amino-6-(D-ribitylamino)uracil is bound at residue Ser111. His125 is a (2S)-2-hydroxy-3-oxobutyl phosphate binding site.

It belongs to the DMRL synthase family. As to quaternary structure, homodecamer, arranged as a dimer of pentamers.

It localises to the cytoplasm. The catalysed reaction is (2S)-2-hydroxy-3-oxobutyl phosphate + 5-amino-6-(D-ribitylamino)uracil = 6,7-dimethyl-8-(1-D-ribityl)lumazine + phosphate + 2 H2O + H(+). It participates in cofactor biosynthesis; riboflavin biosynthesis; riboflavin from 2-hydroxy-3-oxobutyl phosphate and 5-amino-6-(D-ribitylamino)uracil: step 1/2. Catalyzes the formation of 6,7-dimethyl-8-ribityllumazine by condensation of 5-amino-6-(D-ribitylamino)uracil with 3,4-dihydroxy-2-butanone 4-phosphate. This is the penultimate step in the biosynthesis of riboflavin. The isozyme RibH2 but not RibH1 is essential for Brucella intracellular survival and replication inside macrophages or in mice. Displays low catalytic activity in comparison with the isozyme RibH1. Is a highly immunogenic protein. Activates dendritic cells (DCs) in vitro, increasing the levels of costimulatory molecules and the secretion of pro-inflammatory cytokines, and recruits DCs, B cells and CD8+ T cells in vivo, both effects in a TLR4-dependent manner. Induces the cross presentation of covalently attached peptides and generates a strong and long-lasting humoral immune response without adjuvants; TLR4 signaling is necessary for the induction of the cytotoxic response but not for antigen cross presentation. Elicits a TLR4-mediated protective response against B16 melanoma in mice, slowing tumor growth and prolonging mice survival. The sequence is that of 6,7-dimethyl-8-ribityllumazine synthase 2 from Brucella abortus (strain 2308).